Reading from the N-terminus, the 208-residue chain is UPF0711 protein C18orf21 homolog (208 aa).

A compositionally biased stretch (basic residues) spans 123–137 (SKHKSTPGSASKHRT). Disordered regions lie at residues 123 to 180 (SKHK…KSSP) and 189 to 208 (MLEN…LSSL). Polar residues predominate over residues 138 to 152 (PQTVNWATPKSVANR). Residues 153-180 (TPSSTPRSASSNTSSSSSSKSSSVKSSP) are compositionally biased toward low complexity.

Belongs to the UPF0711 family.

This chain is UPF0711 protein C18orf21 homolog, found in Danio rerio (Zebrafish).